The primary structure comprises 506 residues: ATP synthase subunit alpha, plastid (506 aa).

Residue 170 to 177 (GDRQTGKT) participates in ATP binding.

Belongs to the ATPase alpha/beta chains family. As to quaternary structure, F-type ATPases have 2 components, CF(1) - the catalytic core - and CF(0) - the membrane proton channel. CF(1) has five subunits: alpha(3), beta(3), gamma(1), delta(1), epsilon(1). CF(0) has four main subunits: a, b, b' and c.

The protein resides in the plastid membrane. It catalyses the reaction ATP + H2O + 4 H(+)(in) = ADP + phosphate + 5 H(+)(out). Its function is as follows. Produces ATP from ADP in the presence of a proton gradient across the membrane. The alpha chain is a regulatory subunit. This Prototheca wickerhamii protein is ATP synthase subunit alpha, plastid.